The primary structure comprises 520 residues: Cholesterol side-chain cleavage enzyme, mitochondrial (520 aa).

Residues 1–39 constitute a mitochondrion transit peptide; that stretch reads MLARGLPLRSALVKACPPLLNTGREGWGHHRVGTGEGAG. The segment at 27 to 48 is disordered; it reads WGHHRVGTGEGAGISTRTPRPY. Position 461 (C461) interacts with heme.

It belongs to the cytochrome P450 family. As to quaternary structure, interacts with FDX1/adrenodoxin. Heme is required as a cofactor.

It localises to the mitochondrion inner membrane. The catalysed reaction is 6 reduced [adrenodoxin] + cholesterol + 3 O2 + 6 H(+) = 4-methylpentanal + pregnenolone + 6 oxidized [adrenodoxin] + 4 H2O. It catalyses the reaction 2 reduced [adrenodoxin] + cholesterol + O2 + 2 H(+) = (22R)-hydroxycholesterol + 2 oxidized [adrenodoxin] + H2O. The enzyme catalyses (22R)-hydroxycholesterol + 2 reduced [adrenodoxin] + O2 + 2 H(+) = (20R,22R)-20,22-dihydroxycholesterol + 2 oxidized [adrenodoxin] + H2O. It carries out the reaction (20R,22R)-20,22-dihydroxycholesterol + 2 reduced [adrenodoxin] + O2 + 2 H(+) = 4-methylpentanal + pregnenolone + 2 oxidized [adrenodoxin] + 2 H2O. Its pathway is lipid metabolism; C21-steroid hormone metabolism. The protein operates within steroid metabolism; cholesterol metabolism. In terms of biological role, a cytochrome P450 monooxygenase that catalyzes the side-chain hydroxylation and cleavage of cholesterol to pregnenolone, the precursor of most steroid hormones. Catalyzes three sequential oxidation reactions of cholesterol, namely the hydroxylation at C22 followed with the hydroxylation at C20 to yield 20R,22R-hydroxycholesterol that is further cleaved between C20 and C22 to yield the C21-steroid pregnenolone and 4-methylpentanal. Mechanistically, uses molecular oxygen inserting one oxygen atom into a substrate and reducing the second into a water molecule. Two electrons are provided by NADPH via a two-protein mitochondrial transfer system comprising flavoprotein FDXR (adrenodoxin/ferredoxin reductase) and nonheme iron-sulfur protein FDX1 or FDX2 (adrenodoxin/ferredoxin). The chain is Cholesterol side-chain cleavage enzyme, mitochondrial from Capra hircus (Goat).